Here is a 312-residue protein sequence, read N- to C-terminus: Short-chain dehydrogenase/reductase pkfC (312 aa).

The NADP(+) site is built by Lys56, Asn108, and Lys140. Residue Ser164 is the Proton donor of the active site. Residues Tyr193 and Lys197 each coordinate NADP(+). Tyr193 (proton acceptor) is an active-site residue. Catalysis depends on Lys197, which acts as the Lowers pKa of active site Tyr.

It belongs to the short-chain dehydrogenases/reductases (SDR) family.

Its pathway is secondary metabolite biosynthesis. In terms of biological role, short-chain dehydrogenase/reductase; part of the gene cluster that mediates the biosynthesis of aspernidine A, a prenylated isoindolinone. The starting point of the biosynthesis of aspernidin A is the production of orsellinaldehyde by the non-reducing polyketide synthase pkfA. Hydroxylation, methylation of one of the phenol groups, and prenylation, presumably catalyzed by the prenyltransferase pkfE, would be needed to yield aspernidine D. Subsequently, the cytochrome P450 monooxygenase pkfB is responsible for hydroxylation of aspernidine D to yield aspernidine E. The dehydrogenase pkfF may be responsible for further oxidation of aspernidine E to form a dialdehyde intermediate which is further transformed in a series of steps, some of which are enzyme-mediated, to generate aspernidine A. The possibility that additional enzymes outside of the cluster are involved in aspernidine A biosynthesis cannot be excluded. This Emericella nidulans (strain FGSC A4 / ATCC 38163 / CBS 112.46 / NRRL 194 / M139) (Aspergillus nidulans) protein is Short-chain dehydrogenase/reductase pkfC.